A 172-amino-acid polypeptide reads, in one-letter code: Peptide methionine sulfoxide reductase MsrA 1 (172 aa).

Residue Cys14 is part of the active site.

The protein belongs to the MsrA Met sulfoxide reductase family.

It carries out the reaction L-methionyl-[protein] + [thioredoxin]-disulfide + H2O = L-methionyl-(S)-S-oxide-[protein] + [thioredoxin]-dithiol. It catalyses the reaction [thioredoxin]-disulfide + L-methionine + H2O = L-methionine (S)-S-oxide + [thioredoxin]-dithiol. In terms of biological role, has an important function as a repair enzyme for proteins that have been inactivated by oxidation. Catalyzes the reversible oxidation-reduction of methionine sulfoxide in proteins to methionine. The protein is Peptide methionine sulfoxide reductase MsrA 1 (msrA1) of Mesorhizobium japonicum (strain LMG 29417 / CECT 9101 / MAFF 303099) (Mesorhizobium loti (strain MAFF 303099)).